A 93-amino-acid polypeptide reads, in one-letter code: U11-ctenitoxin-Pn1a (93 aa).

The N-terminal stretch at 1-21 (MKCAVLFLSVIALVHIFVVEA) is a signal peptide. Residues 22-34 (EEEPDSDALVPQE) constitute a propeptide that is removed on maturation. Intrachain disulfides connect Cys37/Cys51, Cys44/Cys57, Cys50/Cys75, Cys59/Cys73, and Cys83/Cys90.

This sequence belongs to the neurotoxin 09 (Tx3-6) family. Expressed by the venom gland.

It localises to the secreted. Functionally, probable neurotoxin. The protein is U11-ctenitoxin-Pn1a of Phoneutria nigriventer (Brazilian armed spider).